We begin with the raw amino-acid sequence, 1545 residues long: Tricalbin-3 (1545 aa).

Positions 1-89 are disordered; it reads MTGIKAQVHP…SNPEGKKQSS (89 aa). Residues 1–206 lie on the Cytoplasmic side of the membrane; that stretch reads MTGIKAQVHP…AYILENFYND (206 aa). Residues 62–80 are compositionally biased toward polar residues; sequence TKTSNSVSDVSKGQKTADS. Residues S67 and S112 each carry the phosphoserine modification. The helical transmembrane segment at 207–227 threads the bilayer; that stretch reads WYCNIATVLGTCFFSWLFAYI. A topological domain (extracellular) is located at residue G228. Residues 229-249 traverse the membrane as a helical segment; it reads FSWWSMIFIFLGTATVYNAEY. The Cytoplasmic portion of the chain corresponds to 250-1545; sequence TRFNRNIRDD…VPEVPQEYTQ (1296 aa). An SMP-LTD domain is found at 272–479; it reads RVESTTWLNS…PPNHLDINVE (208 aa). The C2 1 domain occupies 470-596; the sequence is PPNHLDINVE…LQNPVLDNQT (127 aa). Residues 620–660 adopt a coiled-coil conformation; that stretch reads EDKSEEKAVERAEAKAKGKKEDENEDTTEKEEDENEESSQT. Basic and acidic residues predominate over residues 624 to 641; it reads EEKAVERAEAKAKGKKED. The tract at residues 624 to 660 is disordered; the sequence is EEKAVERAEAKAKGKKEDENEDTTEKEEDENEESSQT. A compositionally biased stretch (acidic residues) spans 642-658; it reads ENEDTTEKEEDENEESS. C2 domains follow at residues 646-763 and 783-897; these read TTEK…AQEF and MTGA…SGKY. The stretch at 937-972 forms a coiled coil; the sequence is SPEELVNVEKLEKELKEKKKKFEATQEENEQEMEKN. Residues 1119–1234 form the C2 4 domain; that stretch reads PTSVKLPSSE…EVGKTYNWNL (116 aa). The Ca(2+) site is built by D1150, D1156, D1204, D1206, and D1212. The disordered stretch occupies residues 1304–1404; the sequence is LLKSLGGNPM…NSRGHSRASS (101 aa). The segment covering 1318-1328 has biased composition (polar residues); the sequence is SSNGNESNGAK. Residues 1329 to 1340 show a composition bias toward basic and acidic residues; the sequence is KSSEKKSFDRRS. 3 positions are modified to phosphoserine: S1340, S1342, and S1346. Over residues 1341 to 1351 the composition is skewed to polar residues; it reads PSNLNSTSVTP. T1350 is modified (phosphothreonine). S1354 is subject to Phosphoserine. A compositionally biased stretch (polar residues) spans 1361 to 1373; that stretch reads VPNTSYAPVQSAS. A compositionally biased stretch (low complexity) spans 1377-1404; it reads KPTDNTSSSSNKKDTPSSNSRGHSRASS. The C2 5 domain maps to 1396-1514; the sequence is SRGHSRASSF…QQDGQISVKL (119 aa). A Phosphoserine modification is found at S1400.

This sequence belongs to the tricalbin family. In terms of assembly, interacts with TCB2 via its C-terminal domain. Requires Ca(2+) as cofactor.

Its subcellular location is the cell membrane. The protein localises to the endoplasmic reticulum membrane. Its function is as follows. May play a role in membrane trafficking. The chain is Tricalbin-3 (TCB3) from Saccharomyces cerevisiae (strain ATCC 204508 / S288c) (Baker's yeast).